The primary structure comprises 206 residues: Transcription antitermination protein NusB (206 aa).

Residues 135-206 are disordered; that stretch reads ARGEKTSAQE…ETQPPGVNEV (72 aa). The segment covering 169–180 has biased composition (low complexity); it reads ATPATTPVTTTV.

It belongs to the NusB family.

Its function is as follows. Involved in transcription antitermination. Required for transcription of ribosomal RNA (rRNA) genes. Binds specifically to the boxA antiterminator sequence of the ribosomal RNA (rrn) operons. This chain is Transcription antitermination protein NusB, found in Heliobacterium modesticaldum (strain ATCC 51547 / Ice1).